A 569-amino-acid polypeptide reads, in one-letter code: MFKMYRSPHITRNSFKYLKATNINSCRFYAKEVRFGPDVRSLMLQGVDILADADDVTMGPKGVNVILAKNLGPPKITKDGVTVAKGIDLKDKFQNIGARLVQNVANKTNEEAGDGTTTATVLARPIAKEGFENISRGANPIEIRKGVMLAVESVKRQLKEMSKPVNTSEEIEQVATISANGDESIGKLIAAAMNRVGKNGVITVKDGKTLEDELEIIEGMKFDRGYVSPYFINSNKGPKVEYNDALVLYSEKKIYYASQVVPALELANSQKKPLVIIAEDYDGEPLSVLVVNKLKIGLPVVAVKAPGFGEYRTNALLDMAAATGGVFEDDTNLVRLEDCQAESFGQVGEVIITKDSTLLLKGKGDPNEIKQRIDQIKEELETATSNYDRERLIDRLGRLQSGVAVLLIGGCSEVEVNEKKDRVNDALNATRAAVEEGIVPGGGAALLRCIPALDLLKPANKDQEIGVSIIKKALRTPCITIASNAGFDGAVVVSKVEDMGPEYGYDALNNEYVNMIEKGIIDPTKVVRRALTDASGVASLLTTAEAVICDMPKQKDPPPEYAPIGGGDY.

The N-terminal 29 residues, 1–29 (MFKMYRSPHITRNSFKYLKATNINSCRFY), are a transit peptide targeting the mitochondrion.

Belongs to the chaperonin (HSP60) family. In terms of assembly, forms a single seven-member ring complex, in tight association with the p60 protein. As to expression, testis.

It is found in the mitochondrion. Functionally, implicated in mitochondrial protein import and macromolecular assembly. May facilitate the correct folding of imported proteins. May also prevent misfolding and promote the refolding and proper assembly of unfolded polypeptides generated under stress conditions in the mitochondrial matrix. In Heliothis virescens (Tobacco budworm moth), this protein is 63 kDa chaperonin, mitochondrial.